A 62-amino-acid polypeptide reads, in one-letter code: Conotoxin Qc5.1 (62 aa).

A signal peptide spans 1 to 22; sequence MRCVPVFIILLLLSPSAPSVDA. A propeptide spanning residues 23 to 48 is cleaved from the precursor; sequence HPMTKDDVPQASFHDDAKRTLQVPWM. At Val-60 the chain carries Valine amide.

The protein belongs to the conotoxin T superfamily. In terms of processing, contains 2 disulfide bonds that can be either 'C1-C3, C2-C4' or 'C1-C4, C2-C3', since these disulfide connectivities have been observed for conotoxins with cysteine framework V (for examples, see AC P0DQQ7 and AC P81755). As to expression, expressed by the venom duct.

The protein localises to the secreted. The chain is Conotoxin Qc5.1 from Conus quercinus (Oak cone).